A 285-amino-acid polypeptide reads, in one-letter code: Bifunctional protein FolD (285 aa).

NADP(+)-binding positions include 165-167 (GRS) and S190.

The protein belongs to the tetrahydrofolate dehydrogenase/cyclohydrolase family. In terms of assembly, homodimer.

The catalysed reaction is (6R)-5,10-methylene-5,6,7,8-tetrahydrofolate + NADP(+) = (6R)-5,10-methenyltetrahydrofolate + NADPH. It catalyses the reaction (6R)-5,10-methenyltetrahydrofolate + H2O = (6R)-10-formyltetrahydrofolate + H(+). It participates in one-carbon metabolism; tetrahydrofolate interconversion. In terms of biological role, catalyzes the oxidation of 5,10-methylenetetrahydrofolate to 5,10-methenyltetrahydrofolate and then the hydrolysis of 5,10-methenyltetrahydrofolate to 10-formyltetrahydrofolate. In Staphylococcus haemolyticus (strain JCSC1435), this protein is Bifunctional protein FolD.